A 97-amino-acid polypeptide reads, in one-letter code: Defensin-like protein 245 (97 aa).

An N-terminal signal peptide occupies residues 1 to 24 (MKFAAILLVTCVLFSLLPSHLSQG). 4 disulfide bridges follow: C39–C96, C50–C79, C58–C89, and C77–C91.

Belongs to the DEFL family. Flower buds and roots.

Its subcellular location is the secreted. The protein is Defensin-like protein 245 (SCRL4) of Arabidopsis thaliana (Mouse-ear cress).